The sequence spans 239 residues: Purine nucleoside phosphorylase DeoD-type (239 aa).

His-5 lines the a purine D-ribonucleoside pocket. Phosphate contacts are provided by residues Gly-21, Arg-25, Arg-44, and 88 to 91 (RVGS). Residues 180–182 (EME) and 204–205 (SD) contribute to the a purine D-ribonucleoside site. The active-site Proton donor is the Asp-205.

Belongs to the PNP/UDP phosphorylase family. As to quaternary structure, homohexamer; trimer of homodimers.

The catalysed reaction is a purine D-ribonucleoside + phosphate = a purine nucleobase + alpha-D-ribose 1-phosphate. It carries out the reaction a purine 2'-deoxy-D-ribonucleoside + phosphate = a purine nucleobase + 2-deoxy-alpha-D-ribose 1-phosphate. Its function is as follows. Catalyzes the reversible phosphorolytic breakdown of the N-glycosidic bond in the beta-(deoxy)ribonucleoside molecules, with the formation of the corresponding free purine bases and pentose-1-phosphate. In Erwinia tasmaniensis (strain DSM 17950 / CFBP 7177 / CIP 109463 / NCPPB 4357 / Et1/99), this protein is Purine nucleoside phosphorylase DeoD-type.